A 78-amino-acid chain; its full sequence is Small ribosomal subunit protein bS18 (78 aa).

Belongs to the bacterial ribosomal protein bS18 family. In terms of assembly, part of the 30S ribosomal subunit. Forms a tight heterodimer with protein bS6.

Its function is as follows. Binds as a heterodimer with protein bS6 to the central domain of the 16S rRNA, where it helps stabilize the platform of the 30S subunit. The sequence is that of Small ribosomal subunit protein bS18 from Geobacillus kaustophilus (strain HTA426).